We begin with the raw amino-acid sequence, 284 residues long: 1D-myo-inositol 2-acetamido-2-deoxy-alpha-D-glucopyranoside deacetylase (284 aa).

Histidine 12, aspartate 15, and histidine 146 together coordinate Zn(2+).

Belongs to the MshB deacetylase family. It depends on Zn(2+) as a cofactor.

The enzyme catalyses 1D-myo-inositol 2-acetamido-2-deoxy-alpha-D-glucopyranoside + H2O = 1D-myo-inositol 2-amino-2-deoxy-alpha-D-glucopyranoside + acetate. In terms of biological role, catalyzes the deacetylation of 1D-myo-inositol 2-acetamido-2-deoxy-alpha-D-glucopyranoside (GlcNAc-Ins) in the mycothiol biosynthesis pathway. The sequence is that of 1D-myo-inositol 2-acetamido-2-deoxy-alpha-D-glucopyranoside deacetylase from Mycolicibacterium vanbaalenii (strain DSM 7251 / JCM 13017 / BCRC 16820 / KCTC 9966 / NRRL B-24157 / PYR-1) (Mycobacterium vanbaalenii).